Consider the following 350-residue polypeptide: Divinyl chlorophyll a/b light-harvesting protein PcbB (350 aa).

The next 6 helical transmembrane spans lie at 27-47, 89-109, 141-161, 202-222, 244-264, and 305-325; these read FLAA…SFTL, IVVT…GGLM, FILG…VEWA, VMGG…WHIV, LSWA…WCAS, and LTNI…WHAL.

It belongs to the PsbB/PsbC family. IsiA/Pcb subfamily. The antenna complex consists of divinyl chlorophylls (a and b) and divinyl chlorophyll a/b binding proteins. Under iron-starvation forms a complex with PSI, consisting of a PSI trimer surrounded by a ring composed of 18 PcbB subunits. The cofactor is divinyl chlorophyll a. Divinyl chlorophyll b serves as cofactor.

It localises to the cellular thylakoid membrane. In terms of biological role, the antenna complex functions as a light receptor, it captures and delivers excitation energy to photosystems I. The Prochlorales pcb genes are not related to higher plant LHCs. The polypeptide is Divinyl chlorophyll a/b light-harvesting protein PcbB (pcbB) (Prochlorococcus marinus (strain MIT 9313)).